The primary structure comprises 92 residues: Neurophysin 2 (92 aa).

Intrachain disulfides connect Cys7–Cys51, Cys10–Cys24, Cys18–Cys41, Cys25–Cys31, Cys58–Cys70, Cys64–Cys82, and Cys71–Cys76.

The protein belongs to the vasopressin/oxytocin family.

The protein localises to the secreted. In terms of biological role, neurophysin 2 specifically binds the midbrain peptide hormone vasopressin. The polypeptide is Neurophysin 2 (AVP) (Equus caballus (Horse)).